A 55-amino-acid chain; its full sequence is Large ribosomal subunit protein bL33 (55 aa).

Belongs to the bacterial ribosomal protein bL33 family.

The polypeptide is Large ribosomal subunit protein bL33 (Parvibaculum lavamentivorans (strain DS-1 / DSM 13023 / NCIMB 13966)).